Here is a 180-residue protein sequence, read N- to C-terminus: Bifunctional bis(5'-adenosyl)-triphosphatase/adenylylsulfatase FHIT (180 aa).

Residues 27–134 enclose the HIT domain; that stretch reads SYAFGPYKID…LPRKGGDFEK (108 aa). Substrate-binding residues include N52 and Q108. Positions 119–123 match the Histidine triad motif motif; sequence HVHIH. H121 (tele-AMP-histidine intermediate) is an active-site residue. H123 lines the substrate pocket.

The enzyme catalyses P(1),P(3)-bis(5'-adenosyl) triphosphate + H2O = AMP + ADP + 2 H(+). It carries out the reaction adenosine 5'-phosphosulfate + H2O = sulfate + AMP + 2 H(+). It catalyses the reaction adenosine 5'-phosphosulfate + NH4(+) = adenosine 5'-phosphoramidate + sulfate + 2 H(+). The catalysed reaction is adenosine 5'-phosphoramidate + H2O = AMP + NH4(+). Possesses dinucleoside triphosphate hydrolase activity. Cleaves P(1)-P(3)-bis(5'-adenosyl) triphosphate (Ap3A) to yield AMP and ADP. Exhibits adenylylsulfatase activity, hydrolyzing adenosine 5'-phosphosulfate to yield AMP and sulfate. Exhibits adenosine 5'-monophosphoramidase activity, hydrolyzing purine nucleotide phosphoramidates with a single phosphate group such as adenosine 5'monophosphoramidate (AMP-NH2) to yield AMP and NH2. Exhibits adenylylsulfate-ammonia adenylyltransferase, catalyzing the ammonolysis of adenosine 5'-phosphosulfate resulting in the formation of adenosine 5'-phosphoramidate. The protein is Bifunctional bis(5'-adenosyl)-triphosphatase/adenylylsulfatase FHIT of Arabidopsis thaliana (Mouse-ear cress).